The primary structure comprises 327 residues: Malate dehydrogenase (327 aa).

12–18 (GAAGQIG) is a binding site for NAD(+). Substrate-binding residues include Arg93 and Arg99. Residues Asn106, Gln113, and 130-132 (VGN) contribute to the NAD(+) site. Substrate contacts are provided by Asn132 and Arg163. The Proton acceptor role is filled by His188.

The protein belongs to the LDH/MDH superfamily. MDH type 2 family.

The catalysed reaction is (S)-malate + NAD(+) = oxaloacetate + NADH + H(+). Functionally, catalyzes the reversible oxidation of malate to oxaloacetate. The polypeptide is Malate dehydrogenase (Cupriavidus necator (strain ATCC 17699 / DSM 428 / KCTC 22496 / NCIMB 10442 / H16 / Stanier 337) (Ralstonia eutropha)).